The following is a 209-amino-acid chain: Large ribosomal subunit protein bL9 (209 aa).

The disordered stretch occupies residues 169 to 209; the sequence is RDGASFTEDYDPNAEPGLATEAEEAVADADDNAETNSEESL. The segment covering 189 to 209 has biased composition (acidic residues); the sequence is EAEEAVADADDNAETNSEESL.

The protein belongs to the bacterial ribosomal protein bL9 family.

Its function is as follows. Binds to the 23S rRNA. The sequence is that of Large ribosomal subunit protein bL9 from Zymomonas mobilis subsp. mobilis (strain ATCC 31821 / ZM4 / CP4).